Here is a 199-residue protein sequence, read N- to C-terminus: Pyridoxal 5'-phosphate synthase subunit PdxT (199 aa).

Position 47–49 (47–49 (GES)) interacts with L-glutamine. The active-site Nucleophile is C79. Residues R106 and 133–134 (IR) each bind L-glutamine. Active-site charge relay system residues include H169 and E171.

This sequence belongs to the glutaminase PdxT/SNO family. In terms of assembly, in the presence of PdxS, forms a dodecamer of heterodimers. Only shows activity in the heterodimer.

The catalysed reaction is aldehydo-D-ribose 5-phosphate + D-glyceraldehyde 3-phosphate + L-glutamine = pyridoxal 5'-phosphate + L-glutamate + phosphate + 3 H2O + H(+). The enzyme catalyses L-glutamine + H2O = L-glutamate + NH4(+). It functions in the pathway cofactor biosynthesis; pyridoxal 5'-phosphate biosynthesis. Catalyzes the hydrolysis of glutamine to glutamate and ammonia as part of the biosynthesis of pyridoxal 5'-phosphate. The resulting ammonia molecule is channeled to the active site of PdxS. The polypeptide is Pyridoxal 5'-phosphate synthase subunit PdxT (Desulfitobacterium hafniense (strain DSM 10664 / DCB-2)).